Here is a 373-residue protein sequence, read N- to C-terminus: Opsin Rh1 (373 aa).

At 1-54 (MDSFAAVATQLGPHFAALSNGSVVDKVTPDMAHLISPYWNQFPAMDPIWAKILT) the chain is on the extracellular side. N20 carries N-linked (GlcNAc...) asparagine glycosylation. Residues 55–75 (AYMIIIGMISWCGNGVVIYIF) form a helical membrane-spanning segment. The Cytoplasmic portion of the chain corresponds to 76 to 86 (ATTKSLRTPAN). The helical transmembrane segment at 87 to 107 (LLVINLAISDFGIMITNTPMM) threads the bilayer. Residues 108–124 (GINLYFETWVLGPMMCD) are Extracellular-facing. An intrachain disulfide couples C123 to C200. Residues 125–145 (IYAGLGSAFGCSSIWSMCMIS) form a helical membrane-spanning segment. Residues 146–162 (LDRYQVIVKGMAGRPMT) lie on the Cytoplasmic side of the membrane. A helical transmembrane segment spans residues 163-183 (IPLALGKIAYIWFMSSIWCLA). At 184–219 (PVFGWSRYVPEGNLTSCGIDYLERDWNPRSYLIFYS) the chain is on the extracellular side. N-linked (GlcNAc...) asparagine glycosylation is present at N196. The helical transmembrane segment at 220–240 (IFVYYIPLFLICYSYWFIIAA) threads the bilayer. The Cytoplasmic segment spans residues 241-276 (VSAHEKAMREQAKKMNVKSLRSSEDADKSAEGKLAK). A helical transmembrane segment spans residues 277-297 (VALVTISLWFMAWTPYLVINC). Over 298–308 (MGLFKFEGLTP) the chain is Extracellular. The chain crosses the membrane as a helical span at residues 309–331 (LNTIWGACFAKSAACYNPIVYGI). An N6-(retinylidene)lysine modification is found at K319. Over 332–373 (SHPKYRLALKEKCPCCVFGKVDDGKSSEAQSQATNSEAESKA) the chain is Cytoplasmic. Residues 354–373 (DGKSSEAQSQATNSEAESKA) form a disordered region. Polar residues predominate over residues 358 to 373 (SEAQSQATNSEAESKA).

The protein belongs to the G-protein coupled receptor 1 family. Opsin subfamily. In terms of processing, phosphorylated on some or all of the serine and threonine residues present in the C-terminal region.

It localises to the cell projection. It is found in the rhabdomere membrane. Its function is as follows. Visual pigments are the light-absorbing molecules that mediate vision. They consist of an apoprotein, opsin, covalently linked to cis-retinal. This Drosophila pseudoobscura pseudoobscura (Fruit fly) protein is Opsin Rh1 (ninaE).